Reading from the N-terminus, the 250-residue chain is 3-deoxy-manno-octulosonate cytidylyltransferase (250 aa).

This sequence belongs to the KdsB family.

It is found in the cytoplasm. It catalyses the reaction 3-deoxy-alpha-D-manno-oct-2-ulosonate + CTP = CMP-3-deoxy-beta-D-manno-octulosonate + diphosphate. Its pathway is nucleotide-sugar biosynthesis; CMP-3-deoxy-D-manno-octulosonate biosynthesis; CMP-3-deoxy-D-manno-octulosonate from 3-deoxy-D-manno-octulosonate and CTP: step 1/1. It participates in bacterial outer membrane biogenesis; lipopolysaccharide biosynthesis. Activates KDO (a required 8-carbon sugar) for incorporation into bacterial lipopolysaccharide in Gram-negative bacteria. The polypeptide is 3-deoxy-manno-octulosonate cytidylyltransferase (Xanthomonas campestris pv. campestris (strain 8004)).